Reading from the N-terminus, the 301-residue chain is uncharacterized protein (301 aa).

A divalent metal cation-binding residues include Glu146, Glu148, and Asp177.

It belongs to the FAH family.

This is an uncharacterized protein from Staphylococcus epidermidis (strain ATCC 12228 / FDA PCI 1200).